Reading from the N-terminus, the 347-residue chain is Protein YIPF3 (347 aa).

The tract at residues 1-31 (MATPAAPASGVRNGAGPEWGGFEENIQGGGS) is disordered. A2 is modified (N-acetylalanine; in Protein YIPF3, N-terminally processed). Residues 2-145 (ATPAAPASGV…PIKMVNFPQK (144 aa)) are Cytoplasmic-facing. The chain crosses the membrane as a helical span at residues 146–166 (VAGELYGPLMLVFTLVAILLH). Residues 167–184 (GMKTSDTIIREGTLMGTA) are Lumenal-facing. A helical transmembrane segment spans residues 185 to 205 (IGTCFGYWLGVSSFIYFLAYL). The Cytoplasmic segment spans residues 206–211 (CNAQIT). The helical transmembrane segment at 212–234 (MLQMLALLGYGLFGHCIVLFITY) threads the bilayer. Topologically, residues 235–237 (NIH) are lumenal. The chain crosses the membrane as a helical span at residues 238–260 (LHALFYLFWLLVGGLSTLRMVAV). The Cytoplasmic portion of the chain corresponds to 261–271 (LVSRTVGPTQR). The helical transmembrane segment at 272-292 (LLLCGTLAALHMLFLLYLHFA) threads the bilayer. The Lumenal portion of the chain corresponds to 293–347 (YHKVVEGILDTLEGPNIPPMQRVPRDIPAVLPAARLPVAVINATAKAIAVTLQSH). N334 is a glycosylation site (N-linked (GlcNAc...) asparagine).

Belongs to the YIP1 family. As to quaternary structure, interacts with YIPF4 and YIPF5. In terms of tissue distribution, expressed by splenocytes (at protein level).

Its subcellular location is the cell membrane. It is found in the golgi apparatus. The protein localises to the cis-Golgi network membrane. It localises to the cytoplasm. In terms of biological role, involved in the maintenance of the Golgi structure. May play a role in hematopoiesis. In Mus musculus (Mouse), this protein is Protein YIPF3 (Yipf3).